The chain runs to 79 residues: MAKLSFLSLFLLCLVATATAQNCGRQAGNRACANQLCCSQYGFCGSTSEYCSRANGCQSNCRGGGGADGAGGEAGGGGP.

Residues M1 to A20 form the signal peptide. Residues Q21 to G63 form the Chitin-binding type-1 domain. Intrachain disulfides connect C23–C38, C32–C44, C37–C51, and C57–C61. Residues G64 to P79 constitute a propeptide that is removed on maturation.

Leaves (at protein level).

Functionally, chitin-binding protein which functions in defense against chitin-containing fungal pathogens. Inhibits the growth of budding hyphae in A.alternata and A.brassiciola. The polypeptide is Morintide mO1 (Moringa oleifera (Horseradish tree)).